Reading from the N-terminus, the 438-residue chain is ATP synthase subunit alpha, chloroplastic (438 aa).

ATP is bound at residue 170–177 (GDRQTGKT).

The protein belongs to the ATPase alpha/beta chains family. In terms of assembly, F-type ATPases have 2 components, CF(1) - the catalytic core - and CF(0) - the membrane proton channel. CF(1) has five subunits: alpha(3), beta(3), gamma(1), delta(1), epsilon(1). CF(0) has four main subunits: a, b, b' and c.

It localises to the plastid. The protein localises to the chloroplast thylakoid membrane. It catalyses the reaction ATP + H2O + 4 H(+)(in) = ADP + phosphate + 5 H(+)(out). In terms of biological role, produces ATP from ADP in the presence of a proton gradient across the membrane. The alpha chain is a regulatory subunit. The protein is ATP synthase subunit alpha, chloroplastic of Ochrosphaera neapolitana.